The chain runs to 90 residues: Probable Fe(2+)-trafficking protein (90 aa).

It belongs to the Fe(2+)-trafficking protein family.

In terms of biological role, could be a mediator in iron transactions between iron acquisition and iron-requiring processes, such as synthesis and/or repair of Fe-S clusters in biosynthetic enzymes. The chain is Probable Fe(2+)-trafficking protein from Verminephrobacter eiseniae (strain EF01-2).